Consider the following 681-residue polypeptide: Structure-specific endonuclease subunit SLX4 (681 aa).

Disordered regions lie at residues 239–305 (EREK…QEQL) and 505–528 (EVTG…NENL). Over residues 251–261 (SDSSPEPTQLL) the composition is skewed to polar residues. Positions 265-281 (IIEEEHEVDEEEEDNEN) are enriched in acidic residues. 2 stretches are compositionally biased toward polar residues: residues 288 to 305 (QLAS…QEQL) and 518 to 528 (QVPSSPGNENL).

The protein belongs to the SLX4 family. In terms of assembly, forms a heterodimer with SLX1. Post-translationally, phosphorylated in response to DNA damage.

It is found in the nucleus. Functionally, regulatory subunit of the SLX1-SLX4 structure-specific endonuclease that resolves DNA secondary structures generated during DNA repair and recombination. Has endonuclease activity towards branched DNA substrates, introducing single-strand cuts in duplex DNA close to junctions with ss-DNA. The sequence is that of Structure-specific endonuclease subunit SLX4 from Meyerozyma guilliermondii (strain ATCC 6260 / CBS 566 / DSM 6381 / JCM 1539 / NBRC 10279 / NRRL Y-324) (Yeast).